Consider the following 162-residue polypeptide: ATP synthase subunit b 1 (162 aa).

Residues 1–21 form a helical membrane-spanning segment; sequence MLLTAEFWVAVAFVAFLVIVW.

It belongs to the ATPase B chain family. In terms of assembly, F-type ATPases have 2 components, F(1) - the catalytic core - and F(0) - the membrane proton channel. F(1) has five subunits: alpha(3), beta(3), gamma(1), delta(1), epsilon(1). F(0) has three main subunits: a(1), b(2) and c(10-14). The alpha and beta chains form an alternating ring which encloses part of the gamma chain. F(1) is attached to F(0) by a central stalk formed by the gamma and epsilon chains, while a peripheral stalk is formed by the delta and b chains.

The protein localises to the cell inner membrane. Functionally, f(1)F(0) ATP synthase produces ATP from ADP in the presence of a proton or sodium gradient. F-type ATPases consist of two structural domains, F(1) containing the extramembraneous catalytic core and F(0) containing the membrane proton channel, linked together by a central stalk and a peripheral stalk. During catalysis, ATP synthesis in the catalytic domain of F(1) is coupled via a rotary mechanism of the central stalk subunits to proton translocation. Its function is as follows. Component of the F(0) channel, it forms part of the peripheral stalk, linking F(1) to F(0). The chain is ATP synthase subunit b 1 from Methylorubrum populi (strain ATCC BAA-705 / NCIMB 13946 / BJ001) (Methylobacterium populi).